We begin with the raw amino-acid sequence, 74 residues long: Protein SlyX homolog (74 aa).

Belongs to the SlyX family.

The sequence is that of Protein SlyX homolog from Neisseria meningitidis serogroup A / serotype 4A (strain DSM 15465 / Z2491).